The sequence spans 448 residues: Phosphoglucosamine mutase (448 aa).

Residue S99 is the Phosphoserine intermediate of the active site. S99, D238, D240, and D242 together coordinate Mg(2+). S99 is modified (phosphoserine).

The protein belongs to the phosphohexose mutase family. The cofactor is Mg(2+). Post-translationally, activated by phosphorylation.

The catalysed reaction is alpha-D-glucosamine 1-phosphate = D-glucosamine 6-phosphate. In terms of biological role, catalyzes the conversion of glucosamine-6-phosphate to glucosamine-1-phosphate. The protein is Phosphoglucosamine mutase of Marinomonas sp. (strain MWYL1).